Reading from the N-terminus, the 65-residue chain is Large ribosomal subunit protein bL31 (65 aa).

Positions 16, 18, 36, and 39 each coordinate Zn(2+).

Belongs to the bacterial ribosomal protein bL31 family. Type A subfamily. As to quaternary structure, part of the 50S ribosomal subunit. Zn(2+) is required as a cofactor.

Functionally, binds the 23S rRNA. This is Large ribosomal subunit protein bL31 from Campylobacter jejuni subsp. doylei (strain ATCC BAA-1458 / RM4099 / 269.97).